A 560-amino-acid polypeptide reads, in one-letter code: Oxygen-dependent choline dehydrogenase (560 aa).

An FAD-binding site is contributed by 6–35 (DYIIIGGGSAGSVLGGRLSEDVSNNVLVLE). Catalysis depends on His472, which acts as the Proton acceptor.

This sequence belongs to the GMC oxidoreductase family. FAD serves as cofactor.

It catalyses the reaction choline + A = betaine aldehyde + AH2. The enzyme catalyses betaine aldehyde + NAD(+) + H2O = glycine betaine + NADH + 2 H(+). It functions in the pathway amine and polyamine biosynthesis; betaine biosynthesis via choline pathway; betaine aldehyde from choline (cytochrome c reductase route): step 1/1. Involved in the biosynthesis of the osmoprotectant glycine betaine. Catalyzes the oxidation of choline to betaine aldehyde and betaine aldehyde to glycine betaine at the same rate. The chain is Oxygen-dependent choline dehydrogenase from Staphylococcus xylosus.